The primary structure comprises 108 residues: Probable chaperone-like protein YdbL (108 aa).

The N-terminal stretch at 1-21 (MKKTLLLCAFLVGLVSSNVMA) is a signal peptide.

Its subcellular location is the periplasm. In terms of biological role, probably acts as a chaperone-like protein that contributes to, but is not required for, the formation of the YdbH-YnbE intermembrane bridge. Affects the function and the structure of the YdbH-YnbE complex. Overexpression of ydbL causes a negative effect on YdbH-YnbE function. The sequence is that of Probable chaperone-like protein YdbL (ydbL) from Escherichia coli (strain K12).